Reading from the N-terminus, the 85-residue chain is Cell division protein ZapA (85 aa).

A coiled-coil region spans residues 60–85; that stretch reads AVNVVHDYLKLKEELERLKGQIKEKD.

Belongs to the ZapA family. Type 2 subfamily. As to quaternary structure, homodimer. Interacts with FtsZ.

The protein localises to the cytoplasm. Functionally, activator of cell division through the inhibition of FtsZ GTPase activity, therefore promoting FtsZ assembly into bundles of protofilaments necessary for the formation of the division Z ring. It is recruited early at mid-cell but it is not essential for cell division. The chain is Cell division protein ZapA from Bacillus licheniformis (strain ATCC 14580 / DSM 13 / JCM 2505 / CCUG 7422 / NBRC 12200 / NCIMB 9375 / NCTC 10341 / NRRL NRS-1264 / Gibson 46).